The following is a 386-amino-acid chain: Succinate--CoA ligase [ADP-forming] subunit beta (386 aa).

The ATP-grasp domain maps to 9–244 (KEILHKFNVP…YDEEVKEEIE (236 aa)). Residues Lys-46, 53–55 (GRG), Glu-99, Ser-102, and Glu-107 each bind ATP. Residues Asn-199 and Asp-213 each coordinate Mg(2+). Substrate-binding positions include Asn-264 and 321–323 (GIM).

It belongs to the succinate/malate CoA ligase beta subunit family. Heterotetramer of two alpha and two beta subunits. Mg(2+) serves as cofactor.

It catalyses the reaction succinate + ATP + CoA = succinyl-CoA + ADP + phosphate. The enzyme catalyses GTP + succinate + CoA = succinyl-CoA + GDP + phosphate. The protein operates within carbohydrate metabolism; tricarboxylic acid cycle; succinate from succinyl-CoA (ligase route): step 1/1. In terms of biological role, succinyl-CoA synthetase functions in the citric acid cycle (TCA), coupling the hydrolysis of succinyl-CoA to the synthesis of either ATP or GTP and thus represents the only step of substrate-level phosphorylation in the TCA. The beta subunit provides nucleotide specificity of the enzyme and binds the substrate succinate, while the binding sites for coenzyme A and phosphate are found in the alpha subunit. The sequence is that of Succinate--CoA ligase [ADP-forming] subunit beta from Wolbachia sp. subsp. Brugia malayi (strain TRS).